Reading from the N-terminus, the 64-residue chain is DNA-binding protein 7 (64 aa).

An N6-methyllysine mark is found at K5 and K7.

It belongs to the 7 kDa DNA-binding/endoribonuclease P2 family. Monomer.

It is found in the cytoplasm. Its function is as follows. Can constrain negative DNA supercoils. May be involved in maintaining the integrity of the genome at high temperature. The polypeptide is DNA-binding protein 7 (Sulfurisphaera tokodaii (strain DSM 16993 / JCM 10545 / NBRC 100140 / 7) (Sulfolobus tokodaii)).